Here is a 519-residue protein sequence, read N- to C-terminus: Threonine synthase, chloroplastic (519 aa).

A chloroplast-targeting transit peptide spans 1–40; it reads MAASCMLRSSFISPGLPQLHHQSTSKPNNGIHFFTPIKAT. An N6-(pyridoxal phosphate)lysine modification is found at Lys196. Residues 328 to 332 and Thr465 each bind pyridoxal 5'-phosphate; that span reads GNLGN.

It belongs to the threonine synthase family. As to quaternary structure, homodimer. The cofactor is pyridoxal 5'-phosphate.

It localises to the plastid. Its subcellular location is the chloroplast. It carries out the reaction O-phospho-L-homoserine + H2O = L-threonine + phosphate. It participates in amino-acid biosynthesis; L-threonine biosynthesis; L-threonine from L-aspartate: step 5/5. With respect to regulation, allosterically activated by S-adenosyl-methionine (SAM). Its function is as follows. Catalyzes the gamma-elimination of phosphate from L-phosphohomoserine and the beta-addition of water to produce L-threonine. The polypeptide is Threonine synthase, chloroplastic (Solanum tuberosum (Potato)).